Consider the following 340-residue polypeptide: Mitochondrial distribution and morphology protein 12 (340 aa).

The SMP-LTD domain occupies Met-1–Glu-321. 3 disordered regions span residues His-79–Ile-107, Ser-161–Glu-184, and Ser-319–His-340. Residues Gln-89–Pro-106 show a composition bias toward polar residues. Residues Glu-321–His-340 are compositionally biased toward acidic residues.

The protein belongs to the MDM12 family. In terms of assembly, component of the ER-mitochondria encounter structure (ERMES) or MDM complex, composed of MMM1, MDM10, MDM12 and MDM34. An MMM1 homodimer associates with one molecule of MDM12 on each side in a pairwise head-to-tail manner, and the SMP-LTD domains of MMM1 and MDM12 generate a continuous hydrophobic tunnel for phospholipid trafficking.

The protein resides in the mitochondrion outer membrane. The protein localises to the endoplasmic reticulum membrane. Its function is as follows. Component of the ERMES/MDM complex, which serves as a molecular tether to connect the endoplasmic reticulum (ER) and mitochondria. Components of this complex are involved in the control of mitochondrial shape and protein biogenesis, and function in nonvesicular lipid trafficking between the ER and mitochondria. MDM12 is required for the interaction of the ER-resident membrane protein MMM1 and the outer mitochondrial membrane-resident beta-barrel protein MDM10. The MDM12-MMM1 subcomplex functions in the major beta-barrel assembly pathway that is responsible for biogenesis of all mitochondrial outer membrane beta-barrel proteins, and acts in a late step after the SAM complex. The MDM10-MDM12-MMM1 subcomplex further acts in the TOM40-specific pathway after the action of the MDM12-MMM1 complex. Essential for establishing and maintaining the structure of mitochondria and maintenance of mtDNA nucleoids. In Yarrowia lipolytica (strain CLIB 122 / E 150) (Yeast), this protein is Mitochondrial distribution and morphology protein 12.